The primary structure comprises 960 residues: Phosphoenolpyruvate carboxylase 2 (960 aa).

Active-site residues include histidine 167 and lysine 595.

Belongs to the PEPCase type 1 family. As to quaternary structure, homotetramer. Mg(2+) is required as a cofactor.

Its subcellular location is the cytoplasm. It carries out the reaction oxaloacetate + phosphate = phosphoenolpyruvate + hydrogencarbonate. Its pathway is photosynthesis; C3 acid pathway. Its function is as follows. Through the carboxylation of phosphoenolpyruvate (PEP) it forms oxaloacetate, a four-carbon dicarboxylic acid source for the tricarboxylic acid cycle. This chain is Phosphoenolpyruvate carboxylase 2, found in Sorghum bicolor (Sorghum).